Consider the following 376-residue polypeptide: Chanoclavine-I aldehyde reductase easA (376 aa).

FMN is bound by residues 29-31 (PTT), Ala-64, Gln-106, and His-173. Substrate contacts are provided by His-173 and Asn-176. Catalysis depends on Tyr-178, which acts as the Proton donor. FMN contacts are provided by residues Lys-225, Gly-297, 323–324 (GR), and Arg-324. Substrate is bound at residue Tyr-351.

The protein belongs to the NADH:flavin oxidoreductase/NADH oxidase family. It depends on FMN as a cofactor.

It carries out the reaction dihydrochanoclavine-I aldehyde + NADP(+) = chanoclavine-I aldehyde + NADPH + H(+). It functions in the pathway alkaloid biosynthesis; ergot alkaloid biosynthesis. Functionally, aldehyde reductase; part of the gene cluster that mediates the biosynthesis of fumiclavanine C, a fungal ergot alkaloid. DmaW catalyzes the first step of ergot alkaloid biosynthesis by condensing dimethylallyl diphosphate (DMAP) and tryptophan to form 4-dimethylallyl-L-tryptophan. The second step is catalyzed by the methyltransferase easF that methylates 4-dimethylallyl-L-tryptophan in the presence of S-adenosyl-L-methionine, resulting in the formation of 4-dimethylallyl-L-abrine. The catalase easC and the FAD-dependent oxidoreductase easE then transform 4-dimethylallyl-L-abrine to chanoclavine-I which is further oxidized by EasD in the presence of NAD(+), resulting in the formation of chanoclavine-I aldehyde. EasA reduces chanoclavine-I aldehyde to dihydrochanoclavine-I aldehyde that spontaneously dehydrates to form 6,8-dimethyl-6,7-didehydroergoline. EasG then catalyzes the reduction of 6,8-dimethyl-6,7-didehydroergoline to form festuclavine. Hydrolysis of festuclavine by easM then leads to the formation of fumigaclavine B which is in turn acetylated by easN to fumigaclavine A. Finally, easL catalyzes the conversion of fumigaclavine A into fumigaclavine C by attaching a dimethylallyl moiety to C-2 of the indole nucleus. This Aspergillus fumigatus (strain ATCC MYA-4609 / CBS 101355 / FGSC A1100 / Af293) (Neosartorya fumigata) protein is Chanoclavine-I aldehyde reductase easA.